We begin with the raw amino-acid sequence, 347 residues long: Selenide, water dikinase (347 aa).

Residue Cys17 is part of the active site. ATP is bound by residues Lys20 and Thr48–Asp50. Position 51 (Asp51) interacts with Mg(2+). Residues Asp68, Asp91, and Gly139 to Ser141 each bind ATP. Position 91 (Asp91) interacts with Mg(2+). Residue Asp227 participates in Mg(2+) binding.

The protein belongs to the selenophosphate synthase 1 family. Class I subfamily. As to quaternary structure, homodimer. Mg(2+) is required as a cofactor.

The enzyme catalyses hydrogenselenide + ATP + H2O = selenophosphate + AMP + phosphate + 2 H(+). Functionally, synthesizes selenophosphate from selenide and ATP. The polypeptide is Selenide, water dikinase (Escherichia coli O9:H4 (strain HS)).